A 307-amino-acid polypeptide reads, in one-letter code: Aspartate carbamoyltransferase catalytic subunit (307 aa).

Carbamoyl phosphate contacts are provided by Arg-54 and Thr-55. L-aspartate is bound at residue Lys-83. Carbamoyl phosphate contacts are provided by Arg-104, His-132, and Gln-135. Arg-165 and Arg-228 together coordinate L-aspartate. Residues Leu-267 and Pro-268 each contribute to the carbamoyl phosphate site.

It belongs to the aspartate/ornithine carbamoyltransferase superfamily. ATCase family. In terms of assembly, heterododecamer (2C3:3R2) of six catalytic PyrB chains organized as two trimers (C3), and six regulatory PyrI chains organized as three dimers (R2).

It catalyses the reaction carbamoyl phosphate + L-aspartate = N-carbamoyl-L-aspartate + phosphate + H(+). It participates in pyrimidine metabolism; UMP biosynthesis via de novo pathway; (S)-dihydroorotate from bicarbonate: step 2/3. In terms of biological role, catalyzes the condensation of carbamoyl phosphate and aspartate to form carbamoyl aspartate and inorganic phosphate, the committed step in the de novo pyrimidine nucleotide biosynthesis pathway. The chain is Aspartate carbamoyltransferase catalytic subunit from Clostridium botulinum (strain Langeland / NCTC 10281 / Type F).